Reading from the N-terminus, the 347-residue chain is NADH-quinone oxidoreductase subunit H (347 aa).

9 helical membrane passes run 13–33, 50–70, 82–102, 115–135, 161–181, 198–218, 248–268, 286–306, and 321–341; these read LLIL…VAYI, PNVV…KFVF, GVFL…WAVI, VGIL…IMAG, IGFV…TDIV, FLDW…ISAL, FLLF…LTTI, VPGV…FALV, and LGWK…AAFL.

It belongs to the complex I subunit 1 family. In terms of assembly, NDH-1 is composed of 14 different subunits. Subunits NuoA, H, J, K, L, M, N constitute the membrane sector of the complex.

The protein resides in the cell inner membrane. The catalysed reaction is a quinone + NADH + 5 H(+)(in) = a quinol + NAD(+) + 4 H(+)(out). Functionally, NDH-1 shuttles electrons from NADH, via FMN and iron-sulfur (Fe-S) centers, to quinones in the respiratory chain. The immediate electron acceptor for the enzyme in this species is believed to be ubiquinone. Couples the redox reaction to proton translocation (for every two electrons transferred, four hydrogen ions are translocated across the cytoplasmic membrane), and thus conserves the redox energy in a proton gradient. This subunit may bind ubiquinone. The sequence is that of NADH-quinone oxidoreductase subunit H from Chelativorans sp. (strain BNC1).